We begin with the raw amino-acid sequence, 144 residues long: Maximins 7/H1 (144 aa).

Positions 1–18 are cleaved as a signal peptide; sequence MNFKYIVAVSFLIASAYA. The propeptide occupies 19-43; that stretch reads RSEENDEQSLSQRDVLEEESLREIR. Asn-70 carries the post-translational modification Asparagine amide. The propeptide occupies 74-123; that stretch reads TAEDHEVMKRLEAVMRDLDSLDYPEEAAERETRGFNQEEIANLFTKKEKR. At Leu-143 the chain carries Leucine amide.

This sequence belongs to the bombinin family. Expressed by the skin glands.

The protein localises to the secreted. In terms of biological role, maximin-7 shows antimicrobial activity against bacteria and against the fungus C.albicans. It has little hemolytic activity. Its function is as follows. Maximin-H1 shows antibacterial activity against both Gram-positive and Gram-negative bacteria. It also shows antimicrobial activity against the fungus C.albicans. Shows strong hemolytic activity. In Bombina maxima (Giant fire-bellied toad), this protein is Maximins 7/H1.